We begin with the raw amino-acid sequence, 314 residues long: tRNA uridine(34) hydroxylase (314 aa).

A Rhodanese domain is found at 135–229 (ADPETLVIDT…YLEQIPAEES (95 aa)). The Cysteine persulfide intermediate role is filled by Cys-189.

The protein belongs to the TrhO family.

The enzyme catalyses uridine(34) in tRNA + AH2 + O2 = 5-hydroxyuridine(34) in tRNA + A + H2O. In terms of biological role, catalyzes oxygen-dependent 5-hydroxyuridine (ho5U) modification at position 34 in tRNAs. The polypeptide is tRNA uridine(34) hydroxylase (Sinorhizobium fredii (strain NBRC 101917 / NGR234)).